The chain runs to 345 residues: 3-isopropylmalate dehydrogenase (345 aa).

Arg94, Arg104, Arg130, and Asp215 together coordinate substrate. Residues Asp215, Asp239, and Asp243 each contribute to the Mg(2+) site. Residue 273-285 participates in NAD(+) binding; that stretch reads GSAPDIAGKGIAN.

It belongs to the isocitrate and isopropylmalate dehydrogenases family. LeuB type 1 subfamily. As to quaternary structure, homodimer. The cofactor is Mg(2+). It depends on Mn(2+) as a cofactor.

It localises to the cytoplasm. It catalyses the reaction (2R,3S)-3-isopropylmalate + NAD(+) = 4-methyl-2-oxopentanoate + CO2 + NADH. The protein operates within amino-acid biosynthesis; L-leucine biosynthesis; L-leucine from 3-methyl-2-oxobutanoate: step 3/4. Functionally, catalyzes the oxidation of 3-carboxy-2-hydroxy-4-methylpentanoate (3-isopropylmalate) to 3-carboxy-4-methyl-2-oxopentanoate. The product decarboxylates to 4-methyl-2 oxopentanoate. The polypeptide is 3-isopropylmalate dehydrogenase (leuB) (Lactococcus lactis subsp. lactis (strain IL1403) (Streptococcus lactis)).